The following is a 287-amino-acid chain: Leucine-rich repeat-containing protein 72 (287 aa).

LRR repeat units follow at residues 46–67, 68–89, 90–111, and 112–133; these read DVFELFLSKKELTEVIDLSRFK, KLKYLWLHHNKLHGITFLTRNY, CLTELYLNNNAIFEIEGLHYLP, and SLHILLLHHNELTNIDATVKEL. Positions 147 to 185 constitute an LRRCT domain; it reads NPLCQYNLYRLYIIYHLPGVELLDRNQVTEKERRSMITI.

The chain is Leucine-rich repeat-containing protein 72 (LRRC72) from Homo sapiens (Human).